The sequence spans 681 residues: Sodium-dependent phosphate transporter 1 (681 aa).

The next 6 membrane-spanning stretches (helical) occupy residues 25–45 (NLWM…SVGA), 66–86 (ACIL…AKVS), 106–126 (LMAG…VASF), 162–182 (IVMS…ILFF), 201–221 (ALPI…MYTG), and 234–254 (GTIL…WFFV). Residues 266–295 (VKSSPSESPLMEKKNNLKDHEETKMAPGDV) are disordered. Residues S269 and S273 each carry the phosphoserine modification. The span at 275 to 289 (LMEKKNNLKDHEETK) shows a compositional bias: basic and acidic residues. The next 4 helical transmembrane spans lie at 513-533 (VSLL…FAHG), 561-581 (ATPI…LWVW), 602-622 (FSIE…GLPI), and 652-672 (IFMA…AIMA).

It belongs to the inorganic phosphate transporter (PiT) (TC 2.A.20) family. In terms of tissue distribution, ubiquitously expressed.

The protein resides in the cell membrane. The catalysed reaction is 2 Na(+)(out) + phosphate(out) = 2 Na(+)(in) + phosphate(in). Sodium-phosphate symporter which preferentially transports the monovalent form of phosphate with a stoichiometry of two sodium ions per phosphate ion. May play a role in extracellular matrix and cartilage calcification as well as in vascular calcification. Essential for cell proliferation but this function is independent of its phosphate transporter activity. This chain is Sodium-dependent phosphate transporter 1 (Slc20a1), found in Rattus norvegicus (Rat).